The chain runs to 76 residues: MIYKVFYQETKDQSPRRESTKALYLNIDATDELDGRIKARRLVEDNTYYNVEFIELLSDKHLDYEKETGVFELTEF.

The protein belongs to the RNA polymerase subunit epsilon family. As to quaternary structure, RNAP is composed of a core of 2 alpha, a beta and a beta' subunit. The core is associated with a delta subunit, and at least one of epsilon or omega. When a sigma factor is associated with the core the holoenzyme is formed, which can initiate transcription.

It catalyses the reaction RNA(n) + a ribonucleoside 5'-triphosphate = RNA(n+1) + diphosphate. Its function is as follows. A non-essential component of RNA polymerase (RNAP). This is DNA-directed RNA polymerase subunit epsilon from Streptococcus pyogenes serotype M1.